A 526-amino-acid chain; its full sequence is MAKEIDINKLLAQENNALNTILSQVNELCEQNKKLQGLIEIQNETKELEKEHNRSLPWFKRLVKTVSNVKYIFVKSEEQLTNEAIKYNNKILKDIDNKIYNIAEKSAPLKQELQEEIEKNFKDLTKKDLSKEQRERLSEVYFSYKSKPERFSALNMTNPLQFIKAEELEKQYNSLNATKQNIQNLISENSNIKELKEIQKQVAEIREEIPYTFFEKLNNIWQNVKNVFVNNSEQVLAKNKESNTRAIRKIDEQLYKTKHKFEELIENKERNINDIIAKLPDNEELQKIVSNLANHMTSKKEPILTTSSIAKPLENNVTPPPPLTKNNIPPPPPPPPLSKNNILPPPPPPMPTMAPAQTETLSKPVGVTTTVKKLENQPRPSIDTSDLMREIAGPKNLRKVEKTDVKTQDSRDLLLQSIRGEHKLRKVEFDPNTGKPVAHSHSKPAQNVSKPNGVASILARRVAMEMSDSSSSSGSESDSGNWSDASVNSNKPKALKTRGERDAKTTTHAQKILSNRSSQKPSFVRS.

A disordered region spans residues 305–356; the sequence is TTSSIAKPLENNVTPPPPLTKNNIPPPPPPPPLSKNNILPPPPPPMPTMAPA. Over residues 318 to 352 the composition is skewed to pro residues; the sequence is TPPPPLTKNNIPPPPPPPPLSKNNILPPPPPPMPT. 2 WH2 domains span residues 383–400 and 410–427; these read DTSD…LRKV and SRDL…LRKV. 2 disordered regions span residues 425-452 and 464-526; these read RKVE…SKPN and MEMS…FVRS. The segment at 448 to 484 is central and acidic domains; the sequence is VSKPNGVASILARRVAMEMSDSSSSSGSESDSGNWSD. Low complexity predominate over residues 464 to 480; sequence MEMSDSSSSSGSESDSG. 2 stretches are compositionally biased toward polar residues: residues 481 to 491 and 506 to 526; these read NWSDASVNSNK and TTHA…FVRS.

As to quaternary structure, homodimer.

Its subcellular location is the cell surface. Its function is as follows. Recruits and activates the Arp2/3 complex, which in turn leads to actin polymerization, promoting Rickettsia motility during infection. In Rickettsia felis (strain ATCC VR-1525 / URRWXCal2) (Rickettsia azadi), this protein is Arp2/3 complex-activating protein rickA (rickA).